Here is a 470-residue protein sequence, read N- to C-terminus: Tigger transposable element-derived protein 3 (470 aa).

The 53-residue stretch at 3–55 (LNTKKKLHALSLAEKIQVLELLDESKMSQSEVARRFQVSQPQISRICKNKEKL) folds into the HTH psq-type domain. 2 DNA-binding regions (H-T-H motif) span residues 31-51 (QSEV…ICKN) and 100-130 (PMLL…WKRR). Residues 67 to 137 (ERKRKRESKY…KRRNNVGFGT (71 aa)) enclose the HTH CENPB-type domain. Residues 167–360 (FSPEDVFGCA…VPRQLILSSF (194 aa)) enclose the DDE-1 domain. The segment covering 402-421 (DPGPRVCKEETGTEDSGREE) has biased composition (basic and acidic residues). Residues 402–426 (DPGPRVCKEETGTEDSGREEDGFEP) are disordered.

It belongs to the tigger transposable element derived protein family.

It localises to the nucleus. This chain is Tigger transposable element-derived protein 3 (Tigd3), found in Mus musculus (Mouse).